The sequence spans 198 residues: MTASTTINKGDSPNGDSSASSVLHQKVLGSRRFSNYWWASIVTLGASGFFLAGISSYLRVNLLIVTDPTQLIFVPQGLVMGLYGTAGLLLASYLWLVILWDLGGGYNDFNRETGNIKIFRWGFPGKNRKIEIGSRIQDIQSVRVDIKEGLNPRRALYLRVKGRRDIPLTRVGQPLSLAELETQGAQLARFLGVPLEGL.

The segment at M1–S20 is disordered. The next 2 helical transmembrane spans lie at Y36–L58 and L78–W100.

It belongs to the Ycf4 family.

It localises to the cellular thylakoid membrane. Functionally, seems to be required for the assembly of the photosystem I complex. The sequence is that of Photosystem I assembly protein Ycf4 from Nostoc sp. (strain PCC 7120 / SAG 25.82 / UTEX 2576).